A 43-amino-acid polypeptide reads, in one-letter code: MPKYGFHQSTELINGRLAMLAFILSLFIEFITEQKILHFLKFL.

Belongs to the ELIP/psbS family.

The protein localises to the plastid. It localises to the chloroplast. In terms of biological role, possible role in chlorophyll and/or carotenoid binding. This is an uncharacterized protein from Cyanidium caldarium (Red alga).